The following is a 253-amino-acid chain: Endonuclease NucS (253 aa).

Residues 63–91 form a disordered region; it reads IDDPDTDFTDGSSVGNSEEQGTDGSAHTA. The segment covering 71–87 has biased composition (polar residues); it reads TDGSSVGNSEEQGTDGS.

This sequence belongs to the NucS endonuclease family.

It localises to the cytoplasm. Its function is as follows. Cleaves both 3' and 5' ssDNA extremities of branched DNA structures. In Corynebacterium kroppenstedtii (strain DSM 44385 / JCM 11950 / CIP 105744 / CCUG 35717), this protein is Endonuclease NucS.